The primary structure comprises 338 residues: (2Z,6E)-hedycaryol synthase (338 aa).

Residues aspartate 82 and glutamate 87 each coordinate Mg(2+). The short motif at aspartate 82–glutamate 87 is the DDXXXE motif element. Residue arginine 175 coordinates substrate. Asparagine 221 and serine 225 together coordinate Mg(2+). An NXXXSXXXE motif motif is present at residues asparagine 221–glutamate 229. Arginine 228 provides a ligand contact to substrate. Glutamate 229 contacts Mg(2+).

This sequence belongs to the terpene synthase family. Homodimer. Mg(2+) is required as a cofactor.

It catalyses the reaction (2E,6E)-farnesyl diphosphate + H2O = (2Z,6E)-hedycaryol + diphosphate. The protein operates within secondary metabolite biosynthesis; terpenoid biosynthesis. Catalyzes the conversion of (2E,6E)-farnesyl diphosphate (FPP) into (2Z,6E)-hedycaryol via a 1,11-cyclization. In Kitasatospora setae (strain ATCC 33774 / DSM 43861 / JCM 3304 / KCC A-0304 / NBRC 14216 / KM-6054) (Streptomyces setae), this protein is (2Z,6E)-hedycaryol synthase.